A 511-amino-acid polypeptide reads, in one-letter code: Ulvan-active sulfatase (511 aa).

Positions Met1 to Ser34 are cleaved as a signal peptide. Cys35 carries N-palmitoyl cysteine lipidation. Residue Cys35 is the site of S-diacylglycerol cysteine attachment. Ca(2+) contacts are provided by Asp59 and Cys99. Cys99 acts as the Nucleophile in catalysis. Cys99 is modified (3-oxoalanine (Cys)). His149 is an active-site residue. Ca(2+) is bound at residue Asp305.

Belongs to the sulfatase family. It depends on Ca(2+) as a cofactor. Post-translationally, the conversion to 3-oxoalanine (also known as C-formylglycine, FGly), of a serine or cysteine residue in prokaryotes and of a cysteine residue in eukaryotes, is critical for catalytic activity. This post-translational modification is severely defective in multiple sulfatase deficiency (MSD).

The protein localises to the cell membrane. Its function is as follows. Sulfatase involved in ulvan degradation. Ulvan is the main polysaccharide component of the Ulvales (green seaweed) cell wall. It is composed of disaccharide building blocks comprising 3-sulfated rhamnose (Rha3S) linked to D-glucuronic acid (GlcA), L-iduronic acid (IduA), or D-xylose (Xyl). This Formosa agariphila (strain DSM 15362 / KCTC 12365 / LMG 23005 / KMM 3901 / M-2Alg 35-1) protein is Ulvan-active sulfatase.